A 239-amino-acid chain; its full sequence is Uridylate kinase (239 aa).

10-13 contacts ATP; sequence KISG. Residues 18–23 are involved in allosteric activation by GTP; the sequence is GESGYG. G52 is a binding site for UMP. ATP contacts are provided by G53 and R57. Residues D72 and 133-140 each bind UMP; that span reads TGNPYFTT. 3 residues coordinate ATP: T160, Y166, and D169.

This sequence belongs to the UMP kinase family. In terms of assembly, homohexamer.

It is found in the cytoplasm. The catalysed reaction is UMP + ATP = UDP + ADP. It participates in pyrimidine metabolism; CTP biosynthesis via de novo pathway; UDP from UMP (UMPK route): step 1/1. With respect to regulation, allosterically activated by GTP. Inhibited by UTP. In terms of biological role, catalyzes the reversible phosphorylation of UMP to UDP. This Chlorobaculum tepidum (strain ATCC 49652 / DSM 12025 / NBRC 103806 / TLS) (Chlorobium tepidum) protein is Uridylate kinase.